Reading from the N-terminus, the 259-residue chain is Enkurin (259 aa).

Disordered stretches follow at residues 1–26 (MVAM…EPPQ) and 76–98 (PPKK…TDHP). The span at 76-88 (PPKKKFEWNERRK) shows a compositional bias: basic and acidic residues. An SH3-binding motif is present at residues 86–92 (RRKPPVP). The region spanning 163–255 (KRNEEVKKAQ…VLEKHKVIYI (93 aa)) is the Enkurin domain. Residues 163–258 (KRNEEVKKAQ…KHKVIYIANK (96 aa)) form an interaction with TRPC proteins region. One can recognise an IQ domain in the interval 179–190 (IQENLRKAAMKR).

As to quaternary structure, microtubule inner protein component of sperm flagellar doublet microtubules. Binds calmodulin via its IQ domain. Interacts with TRPC1, TRPC2, TRPC5, but not TRPC3. Interacts with CFAP45. In terms of tissue distribution, expressed in trachea multiciliated cells.

It localises to the cytoplasm. It is found in the cytoskeleton. Its subcellular location is the flagellum axoneme. The protein resides in the cilium axoneme. Adapter that functions to localize a calcium-sensitive signal transduction machinery in sperm to a calcium-permeable ion channel. Microtubule inner protein (MIP) part of the dynein-decorated doublet microtubules (DMTs) in cilia axoneme, which is required for motile cilia beating. The polypeptide is Enkurin (ENKUR) (Bos taurus (Bovine)).